Consider the following 337-residue polypeptide: Neurogenic differentiation factor 6 (337 aa).

A disordered region spans residues 43-82 (LRGKSIKRAPGEETEKEEEEEDREEEDENGLPRRRGLRKK). Acidic residues predominate over residues 54–71 (EETEKEEEEEDREEEDEN). A Nuclear localization signal motif is present at residues 80–86 (RKKKTTK). Positions 94–146 (FRRQEANARERNRMHGLNDALDNLRKVVPCYSKTQKLSKIETLRLAKNYIWAL) constitute a bHLH domain.

In terms of assembly, efficient DNA binding requires dimerization with another bHLH protein.

The protein resides in the nucleus. Activates E box-dependent transcription in collaboration with TCF3/E47. May be a trans-acting factor involved in the development and maintenance of the mammalian nervous system. Transactivates the promoter of its own gene. The protein is Neurogenic differentiation factor 6 (NEUROD6) of Homo sapiens (Human).